A 485-amino-acid chain; its full sequence is NADH-quinone oxidoreductase subunit N (485 aa).

14 helical membrane passes run 10-30 (ILPE…GLFL), 40-60 (IFFQ…EYLI), 71-91 (VVFS…AVFV), 107-127 (GDFY…TAAH), 129-149 (LVTI…LIAI), 164-184 (FVLG…VYGM), 209-229 (FLLV…GAFP), 248-268 (IVAT…LFVG), 276-296 (WIYL…LVAL), 304-324 (LLGY…TLNP), 336-356 (VIVY…ISVG), 377-397 (AFIL…GGFI), 410-430 (GNYF…FYYV), and 454-474 (LIAL…PMLL).

Belongs to the complex I subunit 2 family. As to quaternary structure, NDH-1 is composed of 14 different subunits. Subunits NuoA, H, J, K, L, M, N constitute the membrane sector of the complex.

The protein resides in the cell inner membrane. The catalysed reaction is a quinone + NADH + 5 H(+)(in) = a quinol + NAD(+) + 4 H(+)(out). Its function is as follows. NDH-1 shuttles electrons from NADH, via FMN and iron-sulfur (Fe-S) centers, to quinones in the respiratory chain. The immediate electron acceptor for the enzyme in this species is believed to be ubiquinone. Couples the redox reaction to proton translocation (for every two electrons transferred, four hydrogen ions are translocated across the cytoplasmic membrane), and thus conserves the redox energy in a proton gradient. The polypeptide is NADH-quinone oxidoreductase subunit N (Francisella tularensis subsp. holarctica (strain FTNF002-00 / FTA)).